We begin with the raw amino-acid sequence, 871 residues long: Chaperone protein ClpB 1 (871 aa).

A Clp R domain is found at 6 to 147 (PNQFTEKAWA…REAIQQIRGS (142 aa)). Repeat regions lie at residues 9–73 (FTEK…ISRQ) and 84–147 (LGQS…IRGS). Residues 160-341 (AALEKYGRDL…RRFQQVYVDQ (182 aa)) are NBD1. 207 to 214 (GEPGVGKT) is an ATP binding site. Residues 342–550 (PSVEDTISIL…IAEIISKWTG (209 aa)) are linker. Residues 392 to 526 (IDLVDEAAAK…AEAKLREIQV (135 aa)) are a coiled coil. The segment at 560–771 (EAQKLLHLEE…RVDEFIIFHS (212 aa)) is NBD2. 610–617 (GPTGVGKT) contributes to the ATP binding site. The C-terminal stretch occupies residues 772 to 871 (LRKDQLRQIV…FRRQVELATV (100 aa)).

The protein belongs to the ClpA/ClpB family. In terms of assembly, homohexamer. The oligomerization is ATP-dependent.

Its subcellular location is the cytoplasm. Its function is as follows. Part of a stress-induced multi-chaperone system, it is involved in the recovery of the cell from heat-induced damage, in cooperation with DnaK, DnaJ and GrpE. Acts before DnaK, in the processing of protein aggregates. Protein binding stimulates the ATPase activity; ATP hydrolysis unfolds the denatured protein aggregates, which probably helps expose new hydrophobic binding sites on the surface of ClpB-bound aggregates, contributing to the solubilization and refolding of denatured protein aggregates by DnaK. This is Chaperone protein ClpB 1 (clpB1) from Thermosynechococcus vestitus (strain NIES-2133 / IAM M-273 / BP-1).